The primary structure comprises 280 residues: Protein scylla (280 aa).

Residues 39–96 (LMSKKAKTTTGGSSNGSNATATSTTTSTSSSIKHKQPAGSSNNNVGQSQSKKTKPSGS) are disordered. Low complexity-rich tracts occupy residues 46–69 (TTTG…TSSS) and 77–96 (GSSN…PSGS).

This sequence belongs to the DDIT4 family.

The protein resides in the cytoplasm. Functionally, inhibits cell growth by regulating the Tor pathway upstream of the Tsc1-Tsc2 complex and downstream of Akt1. Acts as a cell death activator during head development. This is Protein scylla (scyl) from Drosophila melanogaster (Fruit fly).